A 336-amino-acid chain; its full sequence is Glycerol-3-phosphate dehydrogenase [NAD(P)+] (336 aa).

Residues serine 13, tryptophan 14, arginine 34, and lysine 108 each coordinate NADPH. Positions 108, 138, and 140 each coordinate sn-glycerol 3-phosphate. An NADPH-binding site is contributed by alanine 142. Lysine 193, aspartate 246, serine 256, arginine 257, and asparagine 258 together coordinate sn-glycerol 3-phosphate. Catalysis depends on lysine 193, which acts as the Proton acceptor. An NADPH-binding site is contributed by arginine 257. 2 residues coordinate NADPH: valine 281 and glutamate 283.

This sequence belongs to the NAD-dependent glycerol-3-phosphate dehydrogenase family.

The protein resides in the cytoplasm. The catalysed reaction is sn-glycerol 3-phosphate + NAD(+) = dihydroxyacetone phosphate + NADH + H(+). The enzyme catalyses sn-glycerol 3-phosphate + NADP(+) = dihydroxyacetone phosphate + NADPH + H(+). It participates in membrane lipid metabolism; glycerophospholipid metabolism. In terms of biological role, catalyzes the reduction of the glycolytic intermediate dihydroxyacetone phosphate (DHAP) to sn-glycerol 3-phosphate (G3P), the key precursor for phospholipid synthesis. This is Glycerol-3-phosphate dehydrogenase [NAD(P)+] from Carboxydothermus hydrogenoformans (strain ATCC BAA-161 / DSM 6008 / Z-2901).